A 280-amino-acid chain; its full sequence is Cytochrome c1 (280 aa).

The first 21 residues, 1 to 21 (MKKLLISAVSALVLGSGAALA), serve as a signal peptide directing secretion. Residues Cys55, Cys58, His59, and Met205 each contribute to the heme c site. A helical transmembrane segment spans residues 249-267 (MGLVAVVMLGLLSVMLYLT).

As to quaternary structure, the main subunits of complex b-c1 are: cytochrome b, cytochrome c1 and the Rieske protein. Post-translationally, binds 1 heme c group covalently per subunit.

It is found in the cell membrane. Functionally, component of the ubiquinol-cytochrome c reductase complex (complex III or cytochrome b-c1 complex), which is a respiratory chain that generates an electrochemical potential coupled to ATP synthesis. c1 functions as an electron donor to cytochrome c. The protein is Cytochrome c1 (petC) of Rhodobacter capsulatus (Rhodopseudomonas capsulata).